The chain runs to 455 residues: MHIKISTDFAIQNLHCTTMIRPLLRLCGQRTAATPFVSFFRPPKKPLSGISFARHYSPTKKPPSEVPTPTPGNYLVPITGPPGDTPRDTDLLIKSLTHKSLLPENNLVRCTVFDSDGNVTVASGEFKRTELLNKHGLLPRDLRKLDTGVNSIVPTILVRDNSILINLLHIRALIKADKVLLFDVFGSTDSKTQSLFMYDLGHKLKKSNKTMGSLPYEMRALEAIFISVIAALDAEMKVHTTVINGILSELEQDIDREKLRHLLIQSKKLSAFLQKATLIRDVIDELLDTDEDLAGLYLTEKKAGHPRAIDDHSEVEMLLETYYKHCDEIVQTVGNLVSNIRNTEEIVNIILDANRNALMHLDLKFQIGALGLAGGTFIASLYGMNLKNFIEESYWGFLGVTGVASLLTVWIIAHFLKSLRQVQRVTMTSDKKKAMKKKDTVAEKRRNHLRNWLTK.

Residues 1–56 constitute a mitochondrion transit peptide; it reads MHIKISTDFAIQNLHCTTMIRPLLRLCGQRTAATPFVSFFRPPKKPLSGISFARHY. 2 helical membrane-spanning segments follow: residues 365-385 and 396-416; these read FQIGALGLAGGTFIASLYGMN and GFLGVTGVASLLTVWIIAHFL. The YGMN signature appears at 382–385; it reads YGMN. Residues 433–444 show a composition bias toward basic and acidic residues; the sequence is KAMKKKDTVAEK. Residues 433 to 455 form a disordered region; the sequence is KAMKKKDTVAEKRRNHLRNWLTK.

Belongs to the CorA metal ion transporter (MIT) (TC 1.A.35) family. As to quaternary structure, forms homooligomers. Interacts with MRS2.

The protein localises to the mitochondrion inner membrane. In terms of biological role, mitochondrial inner membrane magnesium transporter required for mitochondrial magnesium homeostasis. Modulates the conductance of the MRS2 channel. Involved in the splicing of mRNA group II introns in mitochondria by affecting mitochondrial magnesium concentrations, which are critical for group II intron splicing. This is Mitochondrial inner membrane magnesium transporter LPE10 (LPE10) from Yarrowia lipolytica (strain CLIB 122 / E 150) (Yeast).